The sequence spans 452 residues: F-box only protein 47 (452 aa).

Residues 41 to 91 (FGNFKALPLEIFQIILKYLSVKDISMLSMVSKTVSQHIINYISTSSGSKRL) enclose the F-box domain.

Part of a SCF (SKP1-cullin-F-box) protein ligase complex. Widely expressed, with highest levels in kidney, liver and pancreas. Down-regulated in tumors.

Its function is as follows. Probably recognizes and binds to some phosphorylated proteins and promotes their ubiquitination and degradation. This Homo sapiens (Human) protein is F-box only protein 47.